The chain runs to 108 residues: Glutaredoxin-1 (108 aa).

Residues 3 to 106 enclose the Glutaredoxin domain; the sequence is EEFVQQRLAN…DILSSIGVLR (104 aa). C23 and C26 are disulfide-bonded.

This sequence belongs to the glutaredoxin family.

Its subcellular location is the virion. In terms of biological role, has thioltransferase and dehydroascorbate reductase activities. In Camelpox virus (strain M-96), this protein is Glutaredoxin-1 (OPG075).